Consider the following 496-residue polypeptide: NAD(P)H-quinone oxidoreductase subunit 2 A, chloroplastic (496 aa).

14 helical membrane passes run 13-33 (SILPECILIFSSIGILSIDLL), 41-61 (TFWSYSISLAALAISIIILLL), 83-103 (IFRFFLLICSFLCIPLSVDYI), 110-130 (VTEFLLFVLTATLGGMFLCGA), 133-153 (LISIFVASECLALSSYLLSGY), 168-188 (LLMGGASSSILVYGFSLPYGL), 213-233 (VSIAMIFILVGIGFKLSLVPF), 245-265 (PTPVVAFFSVTSKVAALALAT), 279-299 (WHLPLEILAILSMILGNLIAV), 307-327 (MLAYSSISQIGYILIGIIAGD), 338-358 (YMLIYIFMNLGTFACITSFGL), 380-400 (LSLVLCLLSLGGIPPLAGFFG), 413-435 (LYFLVSIALFTSVISIYYYSRII), and 470-490 (MILCTIASTVPGILINPIIAI).

It belongs to the complex I subunit 2 family. As to quaternary structure, NDH is composed of at least 16 different subunits, 5 of which are encoded in the nucleus.

It is found in the plastid. The protein localises to the chloroplast thylakoid membrane. The enzyme catalyses a plastoquinone + NADH + (n+1) H(+)(in) = a plastoquinol + NAD(+) + n H(+)(out). It catalyses the reaction a plastoquinone + NADPH + (n+1) H(+)(in) = a plastoquinol + NADP(+) + n H(+)(out). Functionally, NDH shuttles electrons from NAD(P)H:plastoquinone, via FMN and iron-sulfur (Fe-S) centers, to quinones in the photosynthetic chain and possibly in a chloroplast respiratory chain. The immediate electron acceptor for the enzyme in this species is believed to be plastoquinone. Couples the redox reaction to proton translocation, and thus conserves the redox energy in a proton gradient. This Psilotum nudum (Whisk fern) protein is NAD(P)H-quinone oxidoreductase subunit 2 A, chloroplastic.